A 533-amino-acid polypeptide reads, in one-letter code: Calcium-dependent protein kinase 12 (533 aa).

Positions Met1–Gly77 are disordered. Gly2 is lipidated: N-myristoyl glycine. Residues Glu26–Thr38 are compositionally biased toward basic and acidic residues. Positions Gly57–Ala69 are enriched in low complexity. A Protein kinase domain is found at Tyr91–Leu349. ATP-binding positions include Leu97 to Thr105 and Lys120. The active-site Proton acceptor is the Asp215. The interval Ala354 to Ile384 is autoinhibitory domain. EF-hand domains follow at residues Glu391–Arg426, Ile427–Leu462, Glu463–Gly498, and Asp499–Thr533. Residues Asp404, Asp406, Ser408, Thr410, Glu415, Asp440, Asp442, Ser444, Ser446, Glu451, Asp476, Asp478, Ser480, Tyr482, Glu487, Asp511, Asp513, Asp515, Arg517, and Glu522 each coordinate Ca(2+).

This sequence belongs to the protein kinase superfamily. Ser/Thr protein kinase family. CDPK subfamily. Expressed in roots, leaf blades and developing seeds. Expressed in vascular tissues of roots and leaf blades. Expressed in the phloem tissue of the large vascular bundle in leaf blades.

The protein localises to the membrane. It catalyses the reaction L-seryl-[protein] + ATP = O-phospho-L-seryl-[protein] + ADP + H(+). The catalysed reaction is L-threonyl-[protein] + ATP = O-phospho-L-threonyl-[protein] + ADP + H(+). Activated by calcium. Autophosphorylation may play an important role in the regulation of the kinase activity. Functionally, may play a role in signal transduction pathways that involve calcium as a second messenger. Functions in signal transduction pathways that positively regulate responses to low-nitrogen. Functions in multiple signaling pathways, positively regulating salt tolerance and negatively modulating rice blast fungus resistance. May promote tolerance to salt stress by negatively regulating NADPH oxidase and positively regulating reactive oxygen species (ROS) scavengers. This Oryza sativa subsp. japonica (Rice) protein is Calcium-dependent protein kinase 12.